The sequence spans 454 residues: Bifunctional protein GlmU (454 aa).

The pyrophosphorylase stretch occupies residues 1 to 232; that stretch reads MTDRTCLSIV…VDNVIGINNR (232 aa). Residues 11-14, Lys25, Gln78, and 83-84 each bind UDP-N-acetyl-alpha-D-glucosamine; these read LAAG and GT. Position 108 (Asp108) interacts with Mg(2+). Residues Gly144, Glu158, Asn173, and Asn230 each coordinate UDP-N-acetyl-alpha-D-glucosamine. Mg(2+) is bound at residue Asn230. The interval 233–253 is linker; it reads AELAEAETIWQNRKRRELMLS. Residues 254–454 form an N-acetyltransferase region; that stretch reads GVTLIAPETV…AIKAAKSVSK (201 aa). Residues Arg319 and Lys337 each coordinate UDP-N-acetyl-alpha-D-glucosamine. Catalysis depends on His349, which acts as the Proton acceptor. UDP-N-acetyl-alpha-D-glucosamine-binding residues include Tyr352 and Asn363. Acetyl-CoA-binding positions include Ala366, 372–373, Ser391, Ser409, and Arg426; that span reads NY.

In the N-terminal section; belongs to the N-acetylglucosamine-1-phosphate uridyltransferase family. This sequence in the C-terminal section; belongs to the transferase hexapeptide repeat family. In terms of assembly, homotrimer. It depends on Mg(2+) as a cofactor.

It is found in the cytoplasm. It carries out the reaction alpha-D-glucosamine 1-phosphate + acetyl-CoA = N-acetyl-alpha-D-glucosamine 1-phosphate + CoA + H(+). The enzyme catalyses N-acetyl-alpha-D-glucosamine 1-phosphate + UTP + H(+) = UDP-N-acetyl-alpha-D-glucosamine + diphosphate. It functions in the pathway nucleotide-sugar biosynthesis; UDP-N-acetyl-alpha-D-glucosamine biosynthesis; N-acetyl-alpha-D-glucosamine 1-phosphate from alpha-D-glucosamine 6-phosphate (route II): step 2/2. Its pathway is nucleotide-sugar biosynthesis; UDP-N-acetyl-alpha-D-glucosamine biosynthesis; UDP-N-acetyl-alpha-D-glucosamine from N-acetyl-alpha-D-glucosamine 1-phosphate: step 1/1. The protein operates within bacterial outer membrane biogenesis; LPS lipid A biosynthesis. In terms of biological role, catalyzes the last two sequential reactions in the de novo biosynthetic pathway for UDP-N-acetylglucosamine (UDP-GlcNAc). The C-terminal domain catalyzes the transfer of acetyl group from acetyl coenzyme A to glucosamine-1-phosphate (GlcN-1-P) to produce N-acetylglucosamine-1-phosphate (GlcNAc-1-P), which is converted into UDP-GlcNAc by the transfer of uridine 5-monophosphate (from uridine 5-triphosphate), a reaction catalyzed by the N-terminal domain. This is Bifunctional protein GlmU from Brucella canis (strain ATCC 23365 / NCTC 10854 / RM-666).